Consider the following 318-residue polypeptide: Trans-prenyltransferase (318 aa).

Residues 1-21 (MLHLIYISIIVVLIIILISYT) form a helical membrane-spanning segment. Isopentenyl diphosphate is bound by residues Lys-85, Arg-88, and His-122. Asp-129 and Asp-135 together coordinate Mg(2+). Position 140 (Arg-140) interacts with dimethylallyl diphosphate. Position 141 (Arg-141) interacts with isopentenyl diphosphate. Residues Lys-216, Thr-217, and Gln-254 each contribute to the dimethylallyl diphosphate site.

The protein belongs to the FPP/GGPP synthase family. Asfivirus trans-prenyltransferase subfamily. It depends on Mg(2+) as a cofactor.

The protein localises to the host endoplasmic reticulum. It is found in the host membrane. It catalyses the reaction isopentenyl diphosphate + dimethylallyl diphosphate = (2E)-geranyl diphosphate + diphosphate. It carries out the reaction isopentenyl diphosphate + (2E)-geranyl diphosphate = (2E,6E)-farnesyl diphosphate + diphosphate. The catalysed reaction is isopentenyl diphosphate + (2E,6E)-farnesyl diphosphate = (2E,6E,10E)-geranylgeranyl diphosphate + diphosphate. The enzyme catalyses isopentenyl diphosphate + (2E,6E,10E)-geranylgeranyl diphosphate = (2E,6E,10E,14E)-geranylfarnesyl diphosphate + diphosphate. Its pathway is isoprenoid biosynthesis; farnesyl diphosphate biosynthesis; farnesyl diphosphate from geranyl diphosphate and isopentenyl diphosphate: step 1/1. The protein operates within isoprenoid biosynthesis; geranyl diphosphate biosynthesis; geranyl diphosphate from dimethylallyl diphosphate and isopentenyl diphosphate: step 1/1. It functions in the pathway isoprenoid biosynthesis; geranylgeranyl diphosphate biosynthesis; geranylgeranyl diphosphate from farnesyl diphosphate and isopentenyl diphosphate: step 1/1. Functionally, trans-prenyltransferase that catalyzes the sequential condensation of isopentenyl diphosphate (IPP) with different allylic diphosphates, such as dimethylallyl diphosphate (DMAPP), geranyl diphosphate (GPP), farnesyl diphosphate (FPP) and geranylgeranyl diphosphate (GGPP), farnesyl diphosphate being the best allylic substrate. In African swine fever virus (strain Badajoz 1971 Vero-adapted) (Ba71V), this protein is Trans-prenyltransferase.